We begin with the raw amino-acid sequence, 122 residues long: Large ribosomal subunit protein uL14 (122 aa).

The protein belongs to the universal ribosomal protein uL14 family. In terms of assembly, part of the 50S ribosomal subunit. Forms a cluster with proteins L3 and L19. In the 70S ribosome, L14 and L19 interact and together make contacts with the 16S rRNA in bridges B5 and B8.

In terms of biological role, binds to 23S rRNA. Forms part of two intersubunit bridges in the 70S ribosome. In Chlorobium chlorochromatii (strain CaD3), this protein is Large ribosomal subunit protein uL14.